The following is a 345-amino-acid chain: Linoleate 10R-lipoxygenase COP4 (345 aa).

Residues Asp87, Asp91, Asn222, Ser226, and Glu230 each contribute to the Mg(2+) site. The DDXXD motif motif lies at 87 to 91 (DEISD).

This sequence belongs to the terpene synthase family. Requires Mg(2+) as cofactor.

It carries out the reaction (2E,6E)-farnesyl diphosphate + H2O = cubebol + diphosphate. It catalyses the reaction (2E,6E)-farnesyl diphosphate = beta-copaene + diphosphate. The enzyme catalyses (2E,6E)-farnesyl diphosphate = beta-cubebene + diphosphate. The catalysed reaction is (2E,6E)-farnesyl diphosphate = (+)-sativene + diphosphate. In terms of biological role, sesquiterpene synthase that catalyzes the cyclization of farnesyl diphosphate (FPP) into multiple products, including germacrene D, beta-copaene, beta-cubebene, (+)-sativene and cubebol, a natural sesquiterpene alcohol used in the food industry for its cooling and refreshing taste. Terpenoid hydrocarbons resulting from cyclization of farnesyl diphosphate are intermediates in the biosynthesis of biologically active compounds such as antibiotics, toxins and pheromones. The chain is Linoleate 10R-lipoxygenase COP4 (COP4) from Coprinopsis cinerea (strain Okayama-7 / 130 / ATCC MYA-4618 / FGSC 9003) (Inky cap fungus).